Reading from the N-terminus, the 352-residue chain is Protein RecA (352 aa).

65-72 contacts ATP; sequence GPESSGKT.

This sequence belongs to the RecA family.

It localises to the cytoplasm. Can catalyze the hydrolysis of ATP in the presence of single-stranded DNA, the ATP-dependent uptake of single-stranded DNA by duplex DNA, and the ATP-dependent hybridization of homologous single-stranded DNAs. It interacts with LexA causing its activation and leading to its autocatalytic cleavage. The polypeptide is Protein RecA (Pseudomonas fluorescens (strain Pf0-1)).